We begin with the raw amino-acid sequence, 417 residues long: NADH-quinone oxidoreductase subunit D (417 aa).

It belongs to the complex I 49 kDa subunit family. NDH-1 is composed of 14 different subunits. Subunits NuoB, C, D, E, F, and G constitute the peripheral sector of the complex.

It localises to the cell inner membrane. The enzyme catalyses a quinone + NADH + 5 H(+)(in) = a quinol + NAD(+) + 4 H(+)(out). NDH-1 shuttles electrons from NADH, via FMN and iron-sulfur (Fe-S) centers, to quinones in the respiratory chain. The immediate electron acceptor for the enzyme in this species is believed to be ubiquinone. Couples the redox reaction to proton translocation (for every two electrons transferred, four hydrogen ions are translocated across the cytoplasmic membrane), and thus conserves the redox energy in a proton gradient. The protein is NADH-quinone oxidoreductase subunit D of Cupriavidus metallidurans (strain ATCC 43123 / DSM 2839 / NBRC 102507 / CH34) (Ralstonia metallidurans).